Reading from the N-terminus, the 364-residue chain is Methylthioribose-1-phosphate isomerase (364 aa).

Residues 46-48, Arg-89, and Gln-196 each bind substrate; that span reads RGA. Asp-237 acts as the Proton donor in catalysis. 247–248 contacts substrate; sequence NK.

The protein belongs to the eIF-2B alpha/beta/delta subunits family. MtnA subfamily.

It carries out the reaction 5-(methylsulfanyl)-alpha-D-ribose 1-phosphate = 5-(methylsulfanyl)-D-ribulose 1-phosphate. It participates in amino-acid biosynthesis; L-methionine biosynthesis via salvage pathway; L-methionine from S-methyl-5-thio-alpha-D-ribose 1-phosphate: step 1/6. Catalyzes the interconversion of methylthioribose-1-phosphate (MTR-1-P) into methylthioribulose-1-phosphate (MTRu-1-P). This Pelotomaculum thermopropionicum (strain DSM 13744 / JCM 10971 / SI) protein is Methylthioribose-1-phosphate isomerase.